The primary structure comprises 904 residues: MSDTGTKRRIERFDPAIEPKWREFWEREGIFKAGRRAGAPRRYILEMFPYPSGDLHIGHLKNYVIGDALTRYYVIRGYDVLHPFGWDAFGLPAENAAIKYGRHPREWTYGNIAESKKSLEIAGIMYDWSREVTTCDPDYYRWNQWLFLLLYRKGLAYRAKATVNWDPVDQTVLANEQVDAEGRSWRSGAKVEKRELEQWFFRITAYAERLLNDLDKLDKWPENVKTMQRNWIGRSEGAEVTFLALPPGADLHAPPPPDAEPLVVFTTRPDTLWGATFMVLAPEHPLVSKLTAPERRAEVEAYIARARMESEIERTSATREKTGVFLGSYAINPVNDERIPIWIADYVLMGYGAGAIMAVPAHDERDFAFARQFGLPVRVVVQPPGETLDGATMTEAWPGDGVMVNSGPINGLPVGKGEGQSVKATIAWLEANGKGKGTVTYRLRDWLISRQRYWGTPIPMLHLPDGTIKPVPEDQLPVVLPEVQDYLPKGKSPLAAAESWVNTIDPETGQPARRDTDTMDTFVDSSWYFLRFCDARNDREIFSREAAHRWMPVDQYIGGVEHAILHLLYARFITKVLYDEGLVPDDEPFRALFTQGMVQRRVRTPLEVVAPGMVRFPEELRRKLELPADAQSLDQARALLKERGYTLEEESNGGFTAVSGPVTMSKSAGNGIPVGPFVRQYGSDVARIVVLFAAPPENSMEWTDEGVAGAQRFLNRIVALFSPDREEIVAALNSGNGAAPEGEERALYRKLHETIRKVTLDTEQFRFNTAIAALMELLNEASRYRSEAGRVTPVFAQTAATFARLLSPFAPHLAEELHSWCGGTGSVYDTGWPEWDEAALALDEVEIVLQVNGKLRGRIMAPANADEQQLREWALTNPRVLSFVGDKTVRKVVVVPGKLVNVVV.

Residues 49–59 (PYPSGDLHIGH) carry the 'HIGH' region motif. A 'KMSKS' region motif is present at residues 663–667 (TMSKS). Lys666 is a binding site for ATP.

Belongs to the class-I aminoacyl-tRNA synthetase family.

It localises to the cytoplasm. The catalysed reaction is tRNA(Leu) + L-leucine + ATP = L-leucyl-tRNA(Leu) + AMP + diphosphate. The chain is Leucine--tRNA ligase from Roseiflexus castenholzii (strain DSM 13941 / HLO8).